Here is a 318-residue protein sequence, read N- to C-terminus: NADH-ubiquinone oxidoreductase chain 1 (318 aa).

The next 8 membrane-spanning stretches (helical) occupy residues 2-22 (FMIN…FLTL), 68-88 (ISMF…MWTP), 100-120 (LGIL…LWSG), 146-166 (LAII…PTLI), 171-191 (HIWL…STLA), 222-242 (LFFL…TILF), 253-273 (ELYT…FLWV), and 293-313 (FLPL…ITAG).

Belongs to the complex I subunit 1 family. Core subunit of respiratory chain NADH dehydrogenase (Complex I) which is composed of 45 different subunits.

The protein localises to the mitochondrion inner membrane. It catalyses the reaction a ubiquinone + NADH + 5 H(+)(in) = a ubiquinol + NAD(+) + 4 H(+)(out). Core subunit of the mitochondrial membrane respiratory chain NADH dehydrogenase (Complex I) which catalyzes electron transfer from NADH through the respiratory chain, using ubiquinone as an electron acceptor. Essential for the catalytic activity and assembly of complex I. The protein is NADH-ubiquinone oxidoreductase chain 1 (MT-ND1) of Hipposideros armiger terasensis (Formosan leaf-nosed bat).